Here is a 232-residue protein sequence, read N- to C-terminus: Glycerol-3-phosphate acyltransferase (232 aa).

Transmembrane regions (helical) follow at residues 4 to 24 (FLAIITVAYLIGSIPTSIIAG), 56 to 76 (AVTLIDIAKGTIAAVPVVAFF), 90 to 110 (IALNLIAGMSAVIGHVFTVFA), 124 to 144 (MLIGIAPISMLMVIGVFILAI), 147 to 167 (TRYVSVGSILAAIAFPLIIAI), and 191 to 211 (SLDYHLLIFGGIVAAAIIYTH).

This sequence belongs to the PlsY family. Probably interacts with PlsX.

The protein localises to the cell inner membrane. The enzyme catalyses an acyl phosphate + sn-glycerol 3-phosphate = a 1-acyl-sn-glycero-3-phosphate + phosphate. Its pathway is lipid metabolism; phospholipid metabolism. Functionally, catalyzes the transfer of an acyl group from acyl-phosphate (acyl-PO(4)) to glycerol-3-phosphate (G3P) to form lysophosphatidic acid (LPA). This enzyme utilizes acyl-phosphate as fatty acyl donor, but not acyl-CoA or acyl-ACP. This is Glycerol-3-phosphate acyltransferase from Chlorobaculum parvum (strain DSM 263 / NCIMB 8327) (Chlorobium vibrioforme subsp. thiosulfatophilum).